The primary structure comprises 97 residues: Citrate lyase acyl carrier protein (97 aa).

Ser14 is subject to O-(phosphoribosyl dephospho-coenzyme A)serine.

This sequence belongs to the CitD family. In terms of assembly, oligomer with a subunit composition of (alpha,beta,gamma)6.

The protein resides in the cytoplasm. In terms of biological role, covalent carrier of the coenzyme of citrate lyase. This is Citrate lyase acyl carrier protein from Klebsiella pneumoniae subsp. pneumoniae (strain ATCC 700721 / MGH 78578).